The sequence spans 123 residues: Iron-sulfur cluster insertion protein ErpA (123 aa).

Iron-sulfur cluster is bound by residues cysteine 51, cysteine 115, and cysteine 117.

It belongs to the HesB/IscA family. In terms of assembly, homodimer. Iron-sulfur cluster serves as cofactor.

Functionally, required for insertion of 4Fe-4S clusters for at least IspG. In Halorhodospira halophila (strain DSM 244 / SL1) (Ectothiorhodospira halophila (strain DSM 244 / SL1)), this protein is Iron-sulfur cluster insertion protein ErpA.